Reading from the N-terminus, the 370-residue chain is Dual-specificity RNA methyltransferase RlmN (370 aa).

Glu-93 serves as the catalytic Proton acceptor. In terms of domain architecture, Radical SAM core spans 99 to 337; the sequence is EEGRGTLCVS…VTTVRKTRGD (239 aa). The cysteines at positions 106 and 343 are disulfide-linked. Cys-113, Cys-117, and Cys-120 together coordinate [4Fe-4S] cluster. S-adenosyl-L-methionine-binding positions include 167-168, Ser-199, 221-223, and Asn-300; these read GE and SLH. Cys-343 serves as the catalytic S-methylcysteine intermediate.

Belongs to the radical SAM superfamily. RlmN family. It depends on [4Fe-4S] cluster as a cofactor.

It localises to the cytoplasm. The catalysed reaction is adenosine(2503) in 23S rRNA + 2 reduced [2Fe-2S]-[ferredoxin] + 2 S-adenosyl-L-methionine = 2-methyladenosine(2503) in 23S rRNA + 5'-deoxyadenosine + L-methionine + 2 oxidized [2Fe-2S]-[ferredoxin] + S-adenosyl-L-homocysteine. It carries out the reaction adenosine(37) in tRNA + 2 reduced [2Fe-2S]-[ferredoxin] + 2 S-adenosyl-L-methionine = 2-methyladenosine(37) in tRNA + 5'-deoxyadenosine + L-methionine + 2 oxidized [2Fe-2S]-[ferredoxin] + S-adenosyl-L-homocysteine. Functionally, specifically methylates position 2 of adenine 2503 in 23S rRNA and position 2 of adenine 37 in tRNAs. m2A2503 modification seems to play a crucial role in the proofreading step occurring at the peptidyl transferase center and thus would serve to optimize ribosomal fidelity. This Francisella tularensis subsp. mediasiatica (strain FSC147) protein is Dual-specificity RNA methyltransferase RlmN.